The chain runs to 57 residues: Small ribosomal subunit protein bS21 (57 aa).

It belongs to the bacterial ribosomal protein bS21 family.

The sequence is that of Small ribosomal subunit protein bS21 from Bacillus cytotoxicus (strain DSM 22905 / CIP 110041 / 391-98 / NVH 391-98).